A 562-amino-acid polypeptide reads, in one-letter code: Phosphoacetylglucosamine mutase (562 aa).

Serine 74 (phosphoserine intermediate) is an active-site residue. Positions 74, 291, 293, and 295 each coordinate Mg(2+). Residues 395 to 397 (EAN), 526 to 530 (RPSGT), and arginine 535 contribute to the substrate site.

Belongs to the phosphohexose mutase family. Requires Mg(2+) as cofactor.

It carries out the reaction N-acetyl-alpha-D-glucosamine 1-phosphate = N-acetyl-D-glucosamine 6-phosphate. It participates in nucleotide-sugar biosynthesis; UDP-N-acetyl-alpha-D-glucosamine biosynthesis; N-acetyl-alpha-D-glucosamine 1-phosphate from alpha-D-glucosamine 6-phosphate (route I): step 2/2. Interconverts GlcNAc-6-P and GlcNAc-1-P. The chain is Phosphoacetylglucosamine mutase from Oryza sativa subsp. japonica (Rice).